Consider the following 1090-residue polypeptide: Pullulanase (1090 aa).

The signal sequence occupies residues 1-19; sequence MLRYTRNALVLGSLVLLSG. Residue Cys-20 is the site of N-palmitoyl cysteine attachment. Cys-20 is lipidated: S-diacylglycerol cysteine. Asp-684 functions as the Nucleophile in the catalytic mechanism. The Proton donor role is filled by Glu-713.

This sequence belongs to the glycosyl hydrolase 13 family. Homotrimer.

Its subcellular location is the cell membrane. The enzyme catalyses Hydrolysis of (1-&gt;6)-alpha-D-glucosidic linkages in pullulan, amylopectin and glycogen, and in the alpha- and beta-limit dextrins of amylopectin and glycogen.. The protein is Pullulanase (pulA) of Klebsiella pneumoniae.